The following is a 99-amino-acid chain: Large ribosomal subunit protein uL23 (99 aa).

It belongs to the universal ribosomal protein uL23 family. As to quaternary structure, part of the 50S ribosomal subunit. Contacts protein L29, and trigger factor when it is bound to the ribosome.

Functionally, one of the early assembly proteins it binds 23S rRNA. One of the proteins that surrounds the polypeptide exit tunnel on the outside of the ribosome. Forms the main docking site for trigger factor binding to the ribosome. The chain is Large ribosomal subunit protein uL23 from Pseudomonas aeruginosa (strain LESB58).